Reading from the N-terminus, the 424-residue chain is Enolase (424 aa).

Residue Gln-162 participates in (2R)-2-phosphoglycerate binding. Catalysis depends on Glu-204, which acts as the Proton donor. Mg(2+)-binding residues include Asp-241, Glu-284, and Asp-311. The (2R)-2-phosphoglycerate site is built by Lys-336, Arg-365, Ser-366, and Lys-387. The Proton acceptor role is filled by Lys-336.

The protein belongs to the enolase family. Mg(2+) serves as cofactor.

Its subcellular location is the cytoplasm. It is found in the secreted. The protein localises to the cell surface. It catalyses the reaction (2R)-2-phosphoglycerate = phosphoenolpyruvate + H2O. The protein operates within carbohydrate degradation; glycolysis; pyruvate from D-glyceraldehyde 3-phosphate: step 4/5. Functionally, catalyzes the reversible conversion of 2-phosphoglycerate (2-PG) into phosphoenolpyruvate (PEP). It is essential for the degradation of carbohydrates via glycolysis. This is Enolase from Mesorhizobium japonicum (strain LMG 29417 / CECT 9101 / MAFF 303099) (Mesorhizobium loti (strain MAFF 303099)).